A 30-amino-acid polypeptide reads, in one-letter code: GIPCGESCVWIPCISSAIGCSCKNKVCYRN.

The segment at residues 1 to 30 (GIPCGESCVWIPCISSAIGCSCKNKVCYRN) is a cross-link (cyclopeptide (Gly-Asn)). 3 cysteine pairs are disulfide-bonded: Cys-4-Cys-20, Cys-8-Cys-22, and Cys-13-Cys-27.

In terms of processing, this is a cyclic peptide. As to expression, expressed in petals, petioles, roots and runners but not in leaves (at protein level).

Functionally, probably participates in a plant defense mechanism. This is Cycloviolacin-O4 from Viola odorata (Sweet violet).